The chain runs to 426 residues: Glutamate-1-semialdehyde 2,1-aminomutase (426 aa).

Residue lysine 265 is modified to N6-(pyridoxal phosphate)lysine.

It belongs to the class-III pyridoxal-phosphate-dependent aminotransferase family. HemL subfamily. As to quaternary structure, homodimer. It depends on pyridoxal 5'-phosphate as a cofactor.

Its subcellular location is the cytoplasm. The catalysed reaction is (S)-4-amino-5-oxopentanoate = 5-aminolevulinate. It participates in porphyrin-containing compound metabolism; protoporphyrin-IX biosynthesis; 5-aminolevulinate from L-glutamyl-tRNA(Glu): step 2/2. The polypeptide is Glutamate-1-semialdehyde 2,1-aminomutase (Shigella sonnei (strain Ss046)).